A 330-amino-acid chain; its full sequence is Delta-aminolevulinic acid dehydratase (330 aa).

Residues C122, C124, H131, and C132 each coordinate Zn(2+). Residue K199 is the Schiff-base intermediate with substrate of the active site. K199 bears the N6-succinyllysine mark. A 5-aminolevulinate-binding site is contributed by R209. A Phosphoserine modification is found at S215. R221 provides a ligand contact to 5-aminolevulinate. C223 serves as a coordination point for Zn(2+). Residue K252 is the Schiff-base intermediate with substrate of the active site. An N6-succinyllysine modification is found at K252. Residue S279 coordinates 5-aminolevulinate.

This sequence belongs to the ALAD family. In terms of assembly, homooctamer; active form. Homohexamer; low activity form. Zn(2+) serves as cofactor.

It localises to the cytoplasm. The protein resides in the cytosol. It carries out the reaction 2 5-aminolevulinate = porphobilinogen + 2 H2O + H(+). It participates in porphyrin-containing compound metabolism; protoporphyrin-IX biosynthesis; coproporphyrinogen-III from 5-aminolevulinate: step 1/4. Can alternate between a fully active homooctamer and a low-activity homohexamer. A bound magnesium ion may promote the assembly of the fully active homooctamer. The magnesium-binding site is absent in the low-activity homohexamer. Inhibited by compounds that favor the hexameric state. Inhibited by divalent lead ions. The lead ions partially displace the zinc cofactor. Catalyzes an early step in the biosynthesis of tetrapyrroles. Binds two molecules of 5-aminolevulinate per subunit, each at a distinct site, and catalyzes their condensation to form porphobilinogen. The sequence is that of Delta-aminolevulinic acid dehydratase (ALAD) from Pongo abelii (Sumatran orangutan).